Reading from the N-terminus, the 426-residue chain is Glutamate-1-semialdehyde 2,1-aminomutase (426 aa).

Lys-263 carries the N6-(pyridoxal phosphate)lysine modification.

It belongs to the class-III pyridoxal-phosphate-dependent aminotransferase family. HemL subfamily. As to quaternary structure, homodimer. Requires pyridoxal 5'-phosphate as cofactor.

It is found in the cytoplasm. The catalysed reaction is (S)-4-amino-5-oxopentanoate = 5-aminolevulinate. Its pathway is porphyrin-containing compound metabolism; protoporphyrin-IX biosynthesis; 5-aminolevulinate from L-glutamyl-tRNA(Glu): step 2/2. This is Glutamate-1-semialdehyde 2,1-aminomutase from Caldicellulosiruptor bescii (strain ATCC BAA-1888 / DSM 6725 / KCTC 15123 / Z-1320) (Anaerocellum thermophilum).